The primary structure comprises 486 residues: Cardiolipin synthase A (486 aa).

A run of 2 helical transmembrane segments spans residues 3-23 and 38-58; these read IFYNLIKCLIFSTYWLLIANI and MSWLLTIYIIPFIGISIWFFF. 2 PLD phosphodiesterase domains span residues 219–246 and 399–426; these read VDVRQHRKIILIDNYIAYSGSMNLVDPY and QKGLLHSKSILVDQQLSLIGTVNLDMRS. Active-site residues include His-224, Lys-226, Asp-231, His-404, Lys-406, and Asp-411.

Belongs to the phospholipase D family. Cardiolipin synthase subfamily. ClsA sub-subfamily.

The protein localises to the cell inner membrane. The catalysed reaction is 2 a 1,2-diacyl-sn-glycero-3-phospho-(1'-sn-glycerol) = a cardiolipin + glycerol. Catalyzes the reversible phosphatidyl group transfer from one phosphatidylglycerol molecule to another to form cardiolipin (CL) (diphosphatidylglycerol) and glycerol. This chain is Cardiolipin synthase A, found in Buchnera aphidicola subsp. Acyrthosiphon pisum (strain 5A).